Reading from the N-terminus, the 306-residue chain is 33 kDa chaperonin (306 aa).

2 disulfides stabilise this stretch: cysteine 242–cysteine 244 and cysteine 275–cysteine 278.

Belongs to the HSP33 family. In terms of processing, under oxidizing conditions two disulfide bonds are formed involving the reactive cysteines. Under reducing conditions zinc is bound to the reactive cysteines and the protein is inactive.

The protein resides in the cytoplasm. Its function is as follows. Redox regulated molecular chaperone. Protects both thermally unfolding and oxidatively damaged proteins from irreversible aggregation. Plays an important role in the bacterial defense system toward oxidative stress. The polypeptide is 33 kDa chaperonin (Gloeobacter violaceus (strain ATCC 29082 / PCC 7421)).